Consider the following 313-residue polypeptide: Tyrosine recombinase XerC (313 aa).

Residues 1-85 (MNDQVEAFLR…AVKSFFAFLT (85 aa)) enclose the Core-binding (CB) domain. Residues 106 to 291 (DLPRALTPHQ…NHASSAQPVR (186 aa)) form the Tyr recombinase domain. Residues Arg-147, Lys-171, His-243, Arg-246, and His-269 contribute to the active site. The O-(3'-phospho-DNA)-tyrosine intermediate role is filled by Tyr-278.

Belongs to the 'phage' integrase family. XerC subfamily. Forms a cyclic heterotetrameric complex composed of two molecules of XerC and two molecules of XerD.

It localises to the cytoplasm. In terms of biological role, site-specific tyrosine recombinase, which acts by catalyzing the cutting and rejoining of the recombining DNA molecules. The XerC-XerD complex is essential to convert dimers of the bacterial chromosome into monomers to permit their segregation at cell division. It also contributes to the segregational stability of plasmids. The sequence is that of Tyrosine recombinase XerC from Roseiflexus sp. (strain RS-1).